The primary structure comprises 867 residues: Alanine--tRNA ligase (867 aa).

Zn(2+) is bound by residues His-556, His-560, Cys-658, and His-662.

It belongs to the class-II aminoacyl-tRNA synthetase family. Requires Zn(2+) as cofactor.

It localises to the cytoplasm. The catalysed reaction is tRNA(Ala) + L-alanine + ATP = L-alanyl-tRNA(Ala) + AMP + diphosphate. Its function is as follows. Catalyzes the attachment of alanine to tRNA(Ala) in a two-step reaction: alanine is first activated by ATP to form Ala-AMP and then transferred to the acceptor end of tRNA(Ala). Also edits incorrectly charged Ser-tRNA(Ala) and Gly-tRNA(Ala) via its editing domain. This Fusobacterium nucleatum subsp. nucleatum (strain ATCC 25586 / DSM 15643 / BCRC 10681 / CIP 101130 / JCM 8532 / KCTC 2640 / LMG 13131 / VPI 4355) protein is Alanine--tRNA ligase.